Here is a 384-residue protein sequence, read N- to C-terminus: Polyketide synthase BAS (384 aa).

Catalysis depends on Cys-157, which acts as the Nucleophile and monoketide coumarate intermediate. Cys-157 carries the post-translational modification S-(4-hydroxycinnamyl)cysteine.

It belongs to the thiolase-like superfamily. Chalcone/stilbene synthases family. As to quaternary structure, homodimer.

The enzyme catalyses 4-coumaroyl-CoA + malonyl-CoA + H2O + H(+) = 4-hydroxybenzalacetone + 2 CO2 + 2 CoA. The protein operates within secondary metabolite biosynthesis; flavonoid biosynthesis. Functionally, polyketide synthase producing 4-hydroxybenzalacetone. Can use p-coumaryl-CoA as substrate but does not accept hexanoyl-CoA, isobutyryl-CoA, isovaleryl-CoA, and acetyl-CoA as a substrates. Catalyzes the initial key reaction step in the biosynthesis of phenylbutanoids. In Rheum palmatum (Chinese rhubarb), this protein is Polyketide synthase BAS (BAS).